Here is a 209-residue protein sequence, read N- to C-terminus: Uracil phosphoribosyltransferase (209 aa).

Residues Arg-79, Arg-104, and 131–139 contribute to the 5-phospho-alpha-D-ribose 1-diphosphate site; that span reads DPMLATGGS. Uracil is bound by residues Ile-194 and 199–201; that span reads GDA. A 5-phospho-alpha-D-ribose 1-diphosphate-binding site is contributed by Asp-200.

This sequence belongs to the UPRTase family. The cofactor is Mg(2+).

The catalysed reaction is UMP + diphosphate = 5-phospho-alpha-D-ribose 1-diphosphate + uracil. It functions in the pathway pyrimidine metabolism; UMP biosynthesis via salvage pathway; UMP from uracil: step 1/1. Allosterically activated by GTP. Catalyzes the conversion of uracil and 5-phospho-alpha-D-ribose 1-diphosphate (PRPP) to UMP and diphosphate. The protein is Uracil phosphoribosyltransferase of Natranaerobius thermophilus (strain ATCC BAA-1301 / DSM 18059 / JW/NM-WN-LF).